Here is a 382-residue protein sequence, read N- to C-terminus: Mannitol-1-phosphate 5-dehydrogenase (382 aa).

3-14 lines the NAD(+) pocket; sequence ALHFGAGNIGRG.

Belongs to the mannitol dehydrogenase family.

It carries out the reaction D-mannitol 1-phosphate + NAD(+) = beta-D-fructose 6-phosphate + NADH + H(+). In Salmonella schwarzengrund (strain CVM19633), this protein is Mannitol-1-phosphate 5-dehydrogenase.